We begin with the raw amino-acid sequence, 300 residues long: Nucleotide-binding protein Daci_5422 (300 aa).

10–17 (GMSGSGKS) is a binding site for ATP. A GTP-binding site is contributed by 59-62 (DARS).

This sequence belongs to the RapZ-like family.

Its function is as follows. Displays ATPase and GTPase activities. This is Nucleotide-binding protein Daci_5422 from Delftia acidovorans (strain DSM 14801 / SPH-1).